We begin with the raw amino-acid sequence, 1213 residues long: MILRRSSVFSAFYLHAFLLCLRTTVSDASGHFELEILSMQNANGELQNGACCDGARNPADRKCTRDECDTYFKVCLKEYQSRVSSAGACSFGTGSTPVLGGNKFSTKGTRSEKSRIVLPFSFAWPRSYTLIVEALDFNNETASESGKLIEKAYHSGMINPNRQWQRLTHNGPVAQFEYQIRVTCLEHYYGFGCNKFCRPRDEFFGHYTCDQNGNKTCLEGWTGPDCNTAICRQGCSTEHGSCKQPGGCKCLYGWQGPYCDKCIPHPGCVHGTCVEPWQCLCDTNWGGQLCDKDLNYCGTHQPCLNGGTCSNTGPDKYQCSCEDGYSGVNCERAEHACLSNPCANGGTCKETSQGYECHCAIGWSGTSCEINVDDCTPNQCKHGGTCQDLVNGFKCACPPHWTGKTCQIDANECEDKPCVNAKSCHNLIGAYFCECLPGWSGQNCDININDCKGQCLNGGTCKDLVNGYRCLCPPGYTGEQCEKDVDECASSPCLNGGRCQDEVNGFQCLCPAGFSGQLCQLDIDYCKPNPCQNGAQCFNLASDYFCKCPDDYEGKNCSHLKDHCRTTSCQVIDSCTVAVASNSTPEGVRYISSNVCGPHGRCRSQAGGQFTCECQEGFRGTYCHENINDCESNPCRNGGTCIDKVNVYQCICADGWEGVHCEINIDDCSLNPCLNKGACQDLVNDFYCECRNGWKGKTCHSRDSQCDEATCNNGGTCHDEGDTFKCRCSPGWEGATCNIAKNSSCLPNPCENGGTCVVNGDSFNCVCKEGWEGSTCTENTNDCNPHPCYNSGTCVDGENWYRCECAPGFAGPDCRININECQSSPCAFGSTCVDEINGYRCLCPPGRIGPDCQEVVGRPCIANGQVTADGAKWEEDCNICQCQNGRIHCTMMWCGPKSCRIGKARGGCPASQSCVPIKEEQCFVKPCPSLGECWPSAPPPPSKCHASFSYQDDSCANITFTFNKENMPQGLSVEHVCNELRHWYLLKNLSTEYAVSISCEPSSSASNEIHISISTEEPRTDRSPIKDITVQIIDLVSKHNGNSTIIKAITGVRVHQIPSPKTDYLVPLLSSIFIVLWIFALASAFLWCIHRRRKQNTHSNTATSATEDNTTNNVREQLNQIKNPIEKHAAHGVPIKDYEGKNSIIAKIRTHNSEVEEEDMDKHLQKARFTKQPAYTLVEREERAPNKNPNWTNKQDNRDLETAQSLNRMEYIV.

An N-terminal signal peptide occupies residues methionine 1–serine 26. Residues aspartate 27–tyrosine 1064 are Extracellular-facing. An N-linked (GlcNAc...) asparagine glycan is attached at asparagine 139. In terms of domain architecture, DSL spans valine 182 to cysteine 226. Cystine bridges form between cysteine 184/cysteine 193 and cysteine 197/cysteine 209. N-linked (GlcNAc...) asparagine glycosylation is present at asparagine 214. Disulfide bonds link cysteine 217–cysteine 226, cysteine 231–cysteine 242, cysteine 235–cysteine 248, cysteine 250–cysteine 259, cysteine 262–cysteine 273, cysteine 268–cysteine 279, cysteine 281–cysteine 290, cysteine 297–cysteine 309, cysteine 303–cysteine 319, cysteine 321–cysteine 330, cysteine 337–cysteine 348, cysteine 342–cysteine 357, cysteine 359–cysteine 368, cysteine 375–cysteine 386, cysteine 380–cysteine 395, cysteine 397–cysteine 406, cysteine 413–cysteine 424, cysteine 418–cysteine 433, cysteine 435–cysteine 444, cysteine 451–cysteine 461, cysteine 455–cysteine 470, cysteine 472–cysteine 481, cysteine 488–cysteine 499, cysteine 493–cysteine 508, cysteine 510–cysteine 519, cysteine 526–cysteine 537, cysteine 531–cysteine 546, cysteine 548–cysteine 557, cysteine 596–cysteine 612, cysteine 614–cysteine 623, cysteine 630–cysteine 641, cysteine 635–cysteine 650, cysteine 652–cysteine 661, cysteine 668–cysteine 679, cysteine 673–cysteine 688, cysteine 690–cysteine 699, cysteine 706–cysteine 717, cysteine 711–cysteine 726, and cysteine 728–cysteine 737. The 34-residue stretch at asparagine 227–aspartate 260 folds into the EGF-like 1 domain. One can recognise an EGF-like 2; atypical domain in the interval lysine 261–aspartate 291. EGF-like domains follow at residues aspartate 293 to glutamate 331 and alanine 333 to glutamate 369. The region spanning asparagine 371 to glutamine 407 is the EGF-like 5; calcium-binding domain. Residues aspartate 409–aspartate 445 form the EGF-like 6; calcium-binding domain. An EGF-like 7; calcium-binding domain is found at asparagine 447–glutamate 482. Positions aspartate 484–glutamine 520 constitute an EGF-like 8; calcium-binding domain. EGF-like domains lie at aspartate 522 to serine 558 and serine 592 to histidine 624. Asparagine 556 carries N-linked (GlcNAc...) asparagine glycosylation. The 37-residue stretch at asparagine 626–glutamate 662 folds into the EGF-like 11; calcium-binding domain. In terms of domain architecture, EGF-like 12; calcium-binding spans asparagine 664–histidine 700. The 37-residue stretch at arginine 702–asparagine 738 folds into the EGF-like 13 domain. An N-linked (GlcNAc...) asparagine glycan is attached at asparagine 742. Cystine bridges form between cysteine 745–cysteine 756, cysteine 750–cysteine 765, cysteine 767–cysteine 776, cysteine 783–cysteine 794, cysteine 788–cysteine 803, cysteine 805–cysteine 814, cysteine 821–cysteine 832, cysteine 826–cysteine 841, and cysteine 843–cysteine 852. One can recognise an EGF-like 14 domain in the interval leucine 746 to threonine 777. The region spanning asparagine 779 to arginine 815 is the EGF-like 15; calcium-binding domain. One can recognise an EGF-like 16; calcium-binding domain in the interval asparagine 817–glutamine 853. One can recognise a VWFC domain in the interval cysteine 860–cysteine 914. The EGF-like 17 domain maps to lysine 918–alanine 956. Asparagine 957, asparagine 988, and asparagine 1042 each carry an N-linked (GlcNAc...) asparagine glycan. A helical transmembrane segment spans residues leucine 1065 to tryptophan 1087. Residues cysteine 1088–valine 1213 are Cytoplasmic-facing. Residues glutamate 1181–threonine 1202 form a disordered region.

It localises to the membrane. The protein localises to the cell membrane. Ligand for Notch receptors and involved in the mediation of Notch signaling. Seems to be involved in cell-fate decisions. The chain is Protein jagged-1b (jag1b) from Danio rerio (Zebrafish).